Reading from the N-terminus, the 64-residue chain is Large ribosomal subunit protein bL35 (64 aa).

Composition is skewed to basic residues over residues 1 to 15 (MPKN…KRFK) and 27 to 42 (AGKR…KKTR). Positions 1–45 (MPKNKTHSGASKRFKITGSGKVLRERAGKRHLLEHKSSKKTRSLT) are disordered.

This sequence belongs to the bacterial ribosomal protein bL35 family.

In Streptomyces griseus subsp. griseus (strain JCM 4626 / CBS 651.72 / NBRC 13350 / KCC S-0626 / ISP 5235), this protein is Large ribosomal subunit protein bL35.